The chain runs to 199 residues: Elongation factor Ts, chloroplastic (199 aa).

The protein belongs to the EF-Ts family.

Its subcellular location is the plastid. It localises to the chloroplast. Functionally, associates with the EF-Tu.GDP complex and induces the exchange of GDP to GTP. It remains bound to the aminoacyl-tRNA.EF-Tu.GTP complex up to the GTP hydrolysis stage on the ribosome. The protein is Elongation factor Ts, chloroplastic (tsf) of Galdieria sulphuraria (Red alga).